Reading from the N-terminus, the 120-residue chain is Large ribosomal subunit protein uL18 (120 aa).

This sequence belongs to the universal ribosomal protein uL18 family. Part of the 50S ribosomal subunit; part of the 5S rRNA/L5/L18/L25 subcomplex. Contacts the 5S and 23S rRNAs.

This is one of the proteins that bind and probably mediate the attachment of the 5S RNA into the large ribosomal subunit, where it forms part of the central protuberance. The chain is Large ribosomal subunit protein uL18 from Brucella anthropi (strain ATCC 49188 / DSM 6882 / CCUG 24695 / JCM 21032 / LMG 3331 / NBRC 15819 / NCTC 12168 / Alc 37) (Ochrobactrum anthropi).